A 214-amino-acid chain; its full sequence is Adenylate kinase (214 aa).

10–15 (GAGKGT) contacts ATP. Residues 30–59 (STGDMLRAAIKAGTELGKQAKSVIDAGQLV) are NMP. Residues threonine 31, arginine 36, 57-59 (QLV), 85-88 (GFPR), and glutamine 92 contribute to the AMP site. Positions 122 to 159 (GRRAHLPSGRTYHNVYNPPKEEGKDDITGEELVVRDDD) are LID. Residues arginine 123 and 132–133 (TY) contribute to the ATP site. Positions 156 and 167 each coordinate AMP. Lysine 200 is an ATP binding site.

This sequence belongs to the adenylate kinase family. In terms of assembly, monomer.

It is found in the cytoplasm. It carries out the reaction AMP + ATP = 2 ADP. It functions in the pathway purine metabolism; AMP biosynthesis via salvage pathway; AMP from ADP: step 1/1. Catalyzes the reversible transfer of the terminal phosphate group between ATP and AMP. Plays an important role in cellular energy homeostasis and in adenine nucleotide metabolism. The polypeptide is Adenylate kinase (Vibrio atlanticus (strain LGP32) (Vibrio splendidus (strain Mel32))).